The sequence spans 144 residues: Probable nucleoside diphosphate kinase 5 (144 aa).

Residues Lys-3, Phe-51, Arg-79, Thr-85, Arg-99, and Asn-109 each coordinate ATP. His-112 (pros-phosphohistidine intermediate) is an active-site residue.

This sequence belongs to the NDK family.

It catalyses the reaction a 2'-deoxyribonucleoside 5'-diphosphate + ATP = a 2'-deoxyribonucleoside 5'-triphosphate + ADP. The enzyme catalyses a ribonucleoside 5'-diphosphate + ATP = a ribonucleoside 5'-triphosphate + ADP. Its function is as follows. Involved in the synthesis of nucleoside triphosphates other than ATP. The ATP gamma phosphate is transferred to the NDP beta phosphate via a ping-pong mechanism, using a phosphorylated active-site intermediate. This Arabidopsis thaliana (Mouse-ear cress) protein is Probable nucleoside diphosphate kinase 5.